A 270-amino-acid chain; its full sequence is Putative pyruvate, phosphate dikinase regulatory protein 2 (270 aa).

Position 151-158 (151-158 (GVSRTSKT)) interacts with ADP.

It belongs to the pyruvate, phosphate/water dikinase regulatory protein family. PDRP subfamily.

It catalyses the reaction N(tele)-phospho-L-histidyl/L-threonyl-[pyruvate, phosphate dikinase] + ADP = N(tele)-phospho-L-histidyl/O-phospho-L-threonyl-[pyruvate, phosphate dikinase] + AMP + H(+). It carries out the reaction N(tele)-phospho-L-histidyl/O-phospho-L-threonyl-[pyruvate, phosphate dikinase] + phosphate + H(+) = N(tele)-phospho-L-histidyl/L-threonyl-[pyruvate, phosphate dikinase] + diphosphate. In terms of biological role, bifunctional serine/threonine kinase and phosphorylase involved in the regulation of the pyruvate, phosphate dikinase (PPDK) by catalyzing its phosphorylation/dephosphorylation. The polypeptide is Putative pyruvate, phosphate dikinase regulatory protein 2 (Listeria innocua serovar 6a (strain ATCC BAA-680 / CLIP 11262)).